A 357-amino-acid chain; its full sequence is MGGEVSNKTWVFKKSPSSLPEPGVHTAFEDRPLSLVAPPGGLVIKLLTAGLDPHQRDRMRGAGNVDYVPGYELDEPITNFSIAKVIRSDNDAFEEGSLIAGSLPIAEYGIIPKELIDARAMASPLVWKVSNNYNLDLKHYVGTLGLAGMTAWNSFYGLVKPVKGETIWINAASSSVGEVVVQLAKIEGMKVIASVSSDEKLDYVVNELGADVGFNYQKEPVGKALKRLAPDGLDVVFENVGGDHFQAAIENMKWFGRIISCGTASQYNKPVEEQYGVTNLSEIFRRRIKIQGFIFWDDNIYTDNIENFKATMPKWVSEGKIKSRYTQFEGIEQADKAFLSMFTGGSHGKTVLKISDP.

This sequence belongs to the zinc-containing alcohol dehydrogenase family. Quinone oxidoreductase subfamily.

It participates in mycotoxin biosynthesis. Its function is as follows. Dehydrogenase; part of the gene cluster that mediates the biosynthesis of fusaric acid, a mycotoxin with low to moderate toxicity to animals and humans, but with high phytotoxic properties. L-aspartate is suggested as fusaric acid amino acid precursor that is activated and further processed to O-acetyl-L-homoserine by cluster enzymes aspartate kinase FUB3 and homoserine O-acetyltransferase FUB5, as well as enzymes of the primary metabolism. The polyketide synthase (PKS) FUB1 generates the triketide trans-2-hexenal which is presumptively released by the hydrolase FUB4 and linked to the NRPS-bound amino acid precursor by NAD(P)-dependent dehydrogenase FUB6. FUB1, FUB4, and the non-canonical NRPS Fub8 may form an enzyme complex. Further processing of the NRPS-bound intermediate might be carried out by FUB6 and the O-acetylhomoserine FUB7, enabling a spontaneous electrocyclization to close the carbon backbone of fusaric acid. Dihydrofusaric acid is likely to be released via reduction by the thioester reductase (TR) domain of FUB8 whereupon the final oxidation to fusaric acid may (also) be performed by the FMN-dependent dehydrogenase FUB9. This Gibberella moniliformis (strain M3125 / FGSC 7600) (Maize ear and stalk rot fungus) protein is Dehydrogenase FUB6.